The primary structure comprises 248 residues: Putative amino-acid ABC transporter-binding protein PatH (248 aa).

Residues 1-21 (MKNWIKVAVAAIALSAATVQA) form the signal peptide.

Belongs to the bacterial solute-binding protein 3 family.

It localises to the periplasm. Functionally, probably part of a binding-protein-dependent transport system for an amino acid. This Vibrio harveyi (Beneckea harveyi) protein is Putative amino-acid ABC transporter-binding protein PatH (patH).